A 183-amino-acid polypeptide reads, in one-letter code: Protein Syd (183 aa).

It belongs to the Syd family.

The protein localises to the cell inner membrane. Functionally, interacts with the SecY protein in vivo. May bind preferentially to an uncomplexed state of SecY, thus functioning either as a chelating agent for excess SecY in the cell or as a regulatory factor that negatively controls the translocase function. This Idiomarina loihiensis (strain ATCC BAA-735 / DSM 15497 / L2-TR) protein is Protein Syd.